The primary structure comprises 670 residues: Septation protein 7 (670 aa).

In terms of domain architecture, Septin-type G spans 33-357; it reads KGIKFTFMVV…ETYRTERLTK (325 aa). The G1 motif stretch occupies residues 43–50; the sequence is GESGTGKT. Residues 43–50, Gly-137, 217–225, and Arg-306 each bind GTP; these read GESGTGKT and KADSFTLNE. Residues 134–137 form a G3 motif region; sequence DTPG. Residues 216–219 are G4 motif; that stretch reads GKAD. Disordered stretches follow at residues 383-513 and 574-670; these read LNDS…QRNQ and LNRQ…VSNH. Over residues 395 to 404 the composition is skewed to low complexity; that stretch reads NNNNNNNNNN. Positions 405–421 are enriched in polar residues; sequence ASTIPSMSNLAQLTTST. Composition is skewed to low complexity over residues 433–446 and 463–473; these read SITS…KSTS and SSFTSSTSTVS. The stretch at 472–606 forms a coiled coil; sequence VSLEGGEKEG…SVQSGGVDDG (135 aa). Over residues 476-487 the composition is skewed to basic and acidic residues; sequence GGEKEGGHHDRG. Residues 489–500 show a composition bias toward low complexity; sequence NSTSTNNNNNNN. Positions 631–645 are enriched in basic and acidic residues; the sequence is QSHEYDNSEYHHDDS.

This sequence belongs to the TRAFAC class TrmE-Era-EngA-EngB-Septin-like GTPase superfamily. Septin GTPase family. In terms of assembly, component of the septin complex which consists of CDC3, CDC10, CDC11, CDC12 and probably SEP7. The purified septin complex appeared to have a stoichiometry of 2 CDC3, 1 to 2 CDC10, 1 CDC11, 2 CDC12, and 1 or none SEP7 subunit. Induction of hyphal growth brings about important modifications in septin ring dynamics, because the rings were found in a different state from those of yeast cells. This hyphal-specific state contains a core of stable septins (SEP7, CDC3, and CDC12), and it shows a high CDC10 turnover between the ring and the cytoplasm. Interacts with GIN4. In terms of processing, phosphorylated by GIN4 which stabilizes the GIN4-SEP7 interaction.

The protein resides in the bud neck. Its function is as follows. Septins are GTPases involved in cytokinesis that assemble early in the cell cycle as a patch at the incipient bud site and form a ring before bud emergence, which transforms into an hour-glass shaped collar of cortical filaments that spans both sides of the mother-bud neck. This collar persists until just before cytokinesis, when it splits into two rings that occupy opposite sides of the neck. The septins at the bud neck serve as a structural scaffold that recruits different components involved in diverse processes at specific stages during the cell cycle. Many proteins bind asymmetrically to the septin collar. The septin assembly is regulated by protein kinase GIN4. Septins are also involved in cell morphogenesis, chlamydospores morphogenesis, bud site selection, chitin deposition, cell cycle regulation, cell compartmentalization and spore wall formation. SEP7 is required to convert hyphal septin rings into the hyphal-specific state and is necessary for CDC10 turnover during hyphal growth. In Candida albicans (strain SC5314 / ATCC MYA-2876) (Yeast), this protein is Septation protein 7 (SEP7).